The primary structure comprises 369 residues: S-(hydroxymethyl)glutathione dehydrogenase (369 aa).

Positions 40, 62, 92, 95, 98, 106, and 169 each coordinate Zn(2+).

This sequence belongs to the zinc-containing alcohol dehydrogenase family. Class-III subfamily. In terms of assembly, homodimer. Zn(2+) serves as cofactor.

Its subcellular location is the cytoplasm. The catalysed reaction is S-(hydroxymethyl)glutathione + NADP(+) = S-formylglutathione + NADPH + H(+). It carries out the reaction S-(hydroxymethyl)glutathione + NAD(+) = S-formylglutathione + NADH + H(+). It catalyses the reaction a primary alcohol + NAD(+) = an aldehyde + NADH + H(+). The enzyme catalyses a secondary alcohol + NAD(+) = a ketone + NADH + H(+). The catalysed reaction is S-nitrosoglutathione + NADH + H(+) = S-(hydroxysulfenamide)glutathione + NAD(+). Functionally, has high formaldehyde dehydrogenase activity in the presence of glutathione and catalyzes the oxidation of normal alcohols in a reaction that is not GSH-dependent. In addition, hemithiolacetals other than those formed from GSH, including omega-thiol fatty acids, also are substrates. Also acts as a S-nitroso-glutathione reductase by catalyzing the NADH-dependent reduction of S-nitrosoglutathione. The protein is S-(hydroxymethyl)glutathione dehydrogenase (frmA) of Escherichia coli (strain ATCC 8739 / DSM 1576 / NBRC 3972 / NCIMB 8545 / WDCM 00012 / Crooks).